The sequence spans 295 residues: Pyridoxal 5'-phosphate synthase subunit PdxS (295 aa).

A D-ribose 5-phosphate-binding site is contributed by D23. The active-site Schiff-base intermediate with D-ribose 5-phosphate is the K80. A D-ribose 5-phosphate-binding site is contributed by G152. Residue R164 participates in D-glyceraldehyde 3-phosphate binding. D-ribose 5-phosphate-binding positions include G213 and G234 to S235.

The protein belongs to the PdxS/SNZ family. In terms of assembly, in the presence of PdxT, forms a dodecamer of heterodimers.

It catalyses the reaction aldehydo-D-ribose 5-phosphate + D-glyceraldehyde 3-phosphate + L-glutamine = pyridoxal 5'-phosphate + L-glutamate + phosphate + 3 H2O + H(+). It participates in cofactor biosynthesis; pyridoxal 5'-phosphate biosynthesis. In terms of biological role, catalyzes the formation of pyridoxal 5'-phosphate from ribose 5-phosphate (RBP), glyceraldehyde 3-phosphate (G3P) and ammonia. The ammonia is provided by the PdxT subunit. Can also use ribulose 5-phosphate and dihydroxyacetone phosphate as substrates, resulting from enzyme-catalyzed isomerization of RBP and G3P, respectively. The sequence is that of Pyridoxal 5'-phosphate synthase subunit PdxS from Methanosphaera stadtmanae (strain ATCC 43021 / DSM 3091 / JCM 11832 / MCB-3).